Here is a 193-residue protein sequence, read N- to C-terminus: Potassium-transporting ATPase KdpC subunit (193 aa).

A helical transmembrane segment spans residues 7–27 (PALVLFAALTLLTGVAYPLAV).

Belongs to the KdpC family. The system is composed of three essential subunits: KdpA, KdpB and KdpC.

The protein resides in the cell inner membrane. Functionally, part of the high-affinity ATP-driven potassium transport (or Kdp) system, which catalyzes the hydrolysis of ATP coupled with the electrogenic transport of potassium into the cytoplasm. This subunit acts as a catalytic chaperone that increases the ATP-binding affinity of the ATP-hydrolyzing subunit KdpB by the formation of a transient KdpB/KdpC/ATP ternary complex. The chain is Potassium-transporting ATPase KdpC subunit from Rhodospirillum rubrum (strain ATCC 11170 / ATH 1.1.1 / DSM 467 / LMG 4362 / NCIMB 8255 / S1).